The following is a 507-amino-acid chain: Cysteine--tRNA ligase (507 aa).

Zn(2+) is bound at residue Cys-29. A 'HIGH' region motif is present at residues Pro-31–Asn-41. Residues Cys-207, His-232, and Glu-236 each contribute to the Zn(2+) site. A 'KMSKS' region motif is present at residues Lys-265 to Ser-269. Lys-268 serves as a coordination point for ATP.

The protein belongs to the class-I aminoacyl-tRNA synthetase family. Monomer. The cofactor is Zn(2+).

The protein localises to the cytoplasm. The catalysed reaction is tRNA(Cys) + L-cysteine + ATP = L-cysteinyl-tRNA(Cys) + AMP + diphosphate. In Neorickettsia sennetsu (strain ATCC VR-367 / Miyayama) (Ehrlichia sennetsu), this protein is Cysteine--tRNA ligase.